Here is a 176-residue protein sequence, read N- to C-terminus: Protein FAM89A (176 aa).

The disordered stretch occupies residues 140–165 (DFQEQGSLRDGQGRGSPGDPSLPLTH).

It belongs to the FAM89 family.

The sequence is that of Protein FAM89A (Fam89a) from Rattus norvegicus (Rat).